Reading from the N-terminus, the 369-residue chain is Putative F-box/kelch-repeat protein At4g39760 (369 aa).

The F-box domain occupies Ser-14–Arg-60. Kelch repeat units lie at residues Glu-131 to Pro-177, Asn-178 to Met-224, and Asn-228 to Trp-274.

The polypeptide is Putative F-box/kelch-repeat protein At4g39760 (Arabidopsis thaliana (Mouse-ear cress)).